Consider the following 376-residue polypeptide: Succinyl-diaminopimelate desuccinylase (376 aa).

Position 67 (histidine 67) interacts with Zn(2+). Residue aspartate 69 is part of the active site. Position 100 (aspartate 100) interacts with Zn(2+). Glutamate 134 acts as the Proton acceptor in catalysis. Residues glutamate 135, glutamate 163, and histidine 349 each coordinate Zn(2+).

Belongs to the peptidase M20A family. DapE subfamily. As to quaternary structure, homodimer. It depends on Zn(2+) as a cofactor. Requires Co(2+) as cofactor.

The enzyme catalyses N-succinyl-(2S,6S)-2,6-diaminopimelate + H2O = (2S,6S)-2,6-diaminopimelate + succinate. The protein operates within amino-acid biosynthesis; L-lysine biosynthesis via DAP pathway; LL-2,6-diaminopimelate from (S)-tetrahydrodipicolinate (succinylase route): step 3/3. Its function is as follows. Catalyzes the hydrolysis of N-succinyl-L,L-diaminopimelic acid (SDAP), forming succinate and LL-2,6-diaminopimelate (DAP), an intermediate involved in the bacterial biosynthesis of lysine and meso-diaminopimelic acid, an essential component of bacterial cell walls. In Pseudoalteromonas atlantica (strain T6c / ATCC BAA-1087), this protein is Succinyl-diaminopimelate desuccinylase.